The chain runs to 152 residues: Transcriptional regulator MraZ (152 aa).

SpoVT-AbrB domains follow at residues 5 to 52 (AHAI…PLCE) and 81 to 124 (ASEC…SETR).

Belongs to the MraZ family. As to quaternary structure, forms oligomers.

The protein resides in the cytoplasm. Its subcellular location is the nucleoid. This chain is Transcriptional regulator MraZ, found in Tolumonas auensis (strain DSM 9187 / NBRC 110442 / TA 4).